A 1396-amino-acid polypeptide reads, in one-letter code: DNA-directed RNA polymerase subunit beta' (1396 aa).

The Zn(2+) site is built by Cys70, Cys72, Cys85, and Cys88. Residues Asp460, Asp462, and Asp464 each coordinate Mg(2+). Zn(2+) contacts are provided by Cys814, Cys889, Cys896, and Cys899.

The protein belongs to the RNA polymerase beta' chain family. In terms of assembly, the RNAP catalytic core consists of 2 alpha, 1 beta, 1 beta' and 1 omega subunit. When a sigma factor is associated with the core the holoenzyme is formed, which can initiate transcription. Mg(2+) is required as a cofactor. Zn(2+) serves as cofactor.

It carries out the reaction RNA(n) + a ribonucleoside 5'-triphosphate = RNA(n+1) + diphosphate. Its function is as follows. DNA-dependent RNA polymerase catalyzes the transcription of DNA into RNA using the four ribonucleoside triphosphates as substrates. In Hahella chejuensis (strain KCTC 2396), this protein is DNA-directed RNA polymerase subunit beta'.